Reading from the N-terminus, the 257-residue chain is UPF0246 protein BF4021 (257 aa).

Belongs to the UPF0246 family.

The sequence is that of UPF0246 protein BF4021 from Bacteroides fragilis (strain YCH46).